The sequence spans 351 residues: Centromere-binding protein 1 (351 aa).

An N-acetylmethionine modification is found at Met-1. Polar residues-rich tracts occupy residues 1-10 (MNSLANNNKL), 43-52 (LLSQESNDGN), and 65-77 (KGTQ…GLTS). Disordered stretches follow at residues 1-164 (MNSL…TQQS), 196-233 (KKDI…VERR), and 327-351 (YEDM…PHEA). Phosphoserine; by ATM or ATR is present on Ser-45. A Phosphoserine modification is found at Ser-48. Ser-84 bears the Phosphoserine mark. Polar residues-rich tracts occupy residues 100–124 (VNYT…TNAN) and 138–164 (TPSN…TQQS). Thr-138 bears the Phosphothreonine mark. Residues 222–270 (QRKDSHKEVERRRRENINTAINVLSDLLPVRESSKAAILACAAEYIQKL) enclose the bHLH domain.

In terms of assembly, binds DNA as a dimer. Associates with MET4 to form a heteromeric complex which also includes MET28.

The protein localises to the nucleus. It is found in the mitochondrion. Its subcellular location is the chromosome. It localises to the centromere. In terms of biological role, required for chromosome stability and methionine prototrophy. It is involved in chromosomal segregation. Binds to a highly conserved DNA sequence (5'-RTCACRTG-3'), called CDEI, found in centromeres and in several promoters. DNA-binding activity is enhanced by MET28. Required as an auxiliary factor for transcriptional activation of sulfur metabolism together with MET4 and MET28. In Saccharomyces cerevisiae (strain ATCC 204508 / S288c) (Baker's yeast), this protein is Centromere-binding protein 1 (CBF1).